Here is a 906-residue protein sequence, read N- to C-terminus: Patched domain-containing protein 3 (906 aa).

Positions 1-70 (MISSKVAPGE…LGQEAPPPRR (70 aa)) are disordered. N-linked (GlcNAc...) asparagine glycosylation is found at asparagine 148 and asparagine 235. 11 consecutive transmembrane segments (helical) span residues 338–358 (TVIP…VVSC), 370–390 (VAVF…GLML), 392–412 (LGVP…GVGV), 442–462 (VAVS…TGIT), 476–496 (GTTL…VMAL), 559–579 (FIVV…CFQV), 760–780 (VMIA…HPVC), 782–802 (LWVT…MAFW), 814–834 (LVIC…AFVS), 848–868 (LYLL…GVCV), and 883–903 (IMFL…PVFL). An SSD domain is found at 339-496 (VIPLFHLAYI…ITCFGAVMAL (158 aa)).

Belongs to the patched family. As to expression, expressed in germ cells of the testis (at protein level).

The protein localises to the cell projection. It localises to the cilium. Its subcellular location is the flagellum membrane. The protein resides in the endoplasmic reticulum membrane. Its function is as follows. May play a role in sperm development or sperm function. However, does not appear to have an essential role in spermatogenesis or male fertility. The chain is Patched domain-containing protein 3 (Ptchd3) from Mus musculus (Mouse).